Reading from the N-terminus, the 282-residue chain is 40S small subunit processome assembly factor 1 (282 aa).

Disordered stretches follow at residues 27–98 (YDLG…SEVP) and 121–143 (FHSRSEKRKPKSEEDKPAKNKTK). Over residues 48 to 59 (KRDSETVADRAA) the composition is skewed to basic and acidic residues. A phosphoserine mark is found at S67 and S75. Positions 89 to 98 (SAPAAPSEVP) are enriched in low complexity. A compositionally biased stretch (basic and acidic residues) spans 131 to 143 (KSEEDKPAKNKTK). Position 173 is an N6-acetyllysine (K173). Residues 208–226 (EKRTSMEEEKRAAQETDIF) show a composition bias toward basic and acidic residues. Residues 208-254 (EKRTSMEEEKRAAQETDIFKRKKRKGRSQEDRRSKKLAPSILSSGRA) form a disordered region. A Phosphoserine modification is found at S268.

Part of the small subunit (SSU) processome, composed of more than 70 proteins and the RNA chaperone small nucleolar RNA (snoRNA) U3.

The protein resides in the chromosome. The protein localises to the nucleus. Its subcellular location is the nucleolus. Functionally, part of the small subunit (SSU) processome, first precursor of the small eukaryotic ribosomal subunit. During the assembly of the SSU processome in the nucleolus, many ribosome biogenesis factors, an RNA chaperone and ribosomal proteins associate with the nascent pre-rRNA and work in concert to generate RNA folding, modifications, rearrangements and cleavage as well as targeted degradation of pre-ribosomal RNA by the RNA exosome. Prevents helicase DHX37 to be recruited before post-A1 state. The polypeptide is 40S small subunit processome assembly factor 1 (Rattus norvegicus (Rat)).